The sequence spans 66 residues: Large ribosomal subunit protein bL35 (66 aa).

Basic residues-rich tracts occupy residues 1–16 (MPKF…RFKR) and 23–45 (KRSH…RQLR). A disordered region spans residues 1–66 (MPKFKTHRAS…RIRQMLSGLK (66 aa)).

Belongs to the bacterial ribosomal protein bL35 family.

This is Large ribosomal subunit protein bL35 from Latilactobacillus sakei subsp. sakei (strain 23K) (Lactobacillus sakei subsp. sakei).